A 614-amino-acid polypeptide reads, in one-letter code: Probable LRR receptor-like serine/threonine-protein kinase At5g45780 (614 aa).

Positions 1–26 (MEISLMKFLFLGIWVYYYSVLDSVSA) are cleaved as a signal peptide. Topologically, residues 27–242 (MDSLLSPKGV…NSKHHSLVLS (216 aa)) are extracellular. LRR repeat units follow at residues 104 to 126 (HLHTLLLQNNQLTGPIPSELGQL), 128 to 151 (ELETLDLSGNRFSGEIPASLGFLT), 152 to 174 (HLNYLRLSRNLLSGQVPHLVAGL), and 176 to 197 (GLSFLDLSFNNLSGPTPNISAK). N-linked (GlcNAc...) asparagine glycans are attached at residues asparagine 186, asparagine 193, and asparagine 224. The chain crosses the membrane as a helical span at residues 243–263 (FAFGIVVAFIISLMFLFFWVL). Residues 264–614 (WHRSRLSRSH…IEAIELSGPR (351 aa)) are Cytoplasmic-facing. Threonine 297 carries the post-translational modification Phosphothreonine. The Protein kinase domain occupies 300 to 576 (FSPKNILGQG…QVLKVLEGLV (277 aa)). 306–314 (LGQGGFGMV) lines the ATP pocket. Threonine 323 carries the post-translational modification Phosphothreonine. Lysine 328 is an ATP binding site. The residue at position 380 (serine 380) is a Phosphoserine. Residue aspartate 426 is the Proton acceptor of the active site. 3 positions are modified to phosphothreonine: threonine 459, threonine 460, and threonine 465. Tyrosine 473 carries the post-translational modification Phosphotyrosine. Residue serine 475 is modified to Phosphoserine. Phosphothreonine is present on threonine 476. Serine 480 bears the Phosphoserine mark. Threonine 555 is subject to Phosphothreonine.

This sequence belongs to the protein kinase superfamily. Ser/Thr protein kinase family.

It is found in the membrane. It carries out the reaction L-seryl-[protein] + ATP = O-phospho-L-seryl-[protein] + ADP + H(+). The catalysed reaction is L-threonyl-[protein] + ATP = O-phospho-L-threonyl-[protein] + ADP + H(+). This Arabidopsis thaliana (Mouse-ear cress) protein is Probable LRR receptor-like serine/threonine-protein kinase At5g45780.